A 589-amino-acid polypeptide reads, in one-letter code: Protein PAF1 homolog (589 aa).

The segment covering 1-54 has biased composition (pro residues); that stretch reads MASYRPPYPPLPQPPSQNSLAPPPPPPSLPPPVPPPPPSHQPYSYPPPPPPPPH. Disordered stretches follow at residues 1 to 180 and 542 to 589; these read MASY…PLLT and GVYS…DYSE. The segment covering 55-65 has biased composition (low complexity); sequence AYYQQGPHYPQ. Positions 71–87 are enriched in pro residues; it reads APPPPPPPSAPPPLVPD. A compositionally biased stretch (basic and acidic residues) spans 88–116; the sequence is PPRHQGPNDHEKGASKQVGRRERAKPDPS. The segment covering 117 to 127 has biased composition (basic residues); that stretch reads KHHHRSHLPHS. Residues 126–159 are a coiled coil; sequence HSKKIETEEERRLRKKRELEKQRQDEKHRQQMKN. Residues 128-154 show a composition bias toward basic and acidic residues; it reads KKIETEEERRLRKKRELEKQRQDEKHR.

Belongs to the PAF1 family. Component of the nuclear PAF1 complex (PAF1C), which consists of VIP2/ELF7/PAF1, VIP3/SKI8/WDR61, VIP4/LEO1, VIP5/RTF1, VIP6/ELF8/CTR9 and CDC73. As to expression, expressed in roots, leaves and shoot apex.

Its subcellular location is the nucleus. Its function is as follows. Component of the PAF1 complex (PAF1C) which is involved in histone modifications such as methylation on histone H3 'Lys-4' (H3K4me3). Involved in regulation of flowering time. Required for the expression of the flowering repressors and MAD-box genes FLC, AGL27/FLM and AGL31/MAF2. Required for histone H3 trimethylation on 'Lys-4' H3K4me3 at the FLC and AGL27/FLM loci. Involved in the control of seed dormancy and germination. The sequence is that of Protein PAF1 homolog from Arabidopsis thaliana (Mouse-ear cress).